An 82-amino-acid polypeptide reads, in one-letter code: Small ribosomal subunit protein bS16 (82 aa).

It belongs to the bacterial ribosomal protein bS16 family.

The protein is Small ribosomal subunit protein bS16 of Klebsiella pneumoniae subsp. pneumoniae (strain ATCC 700721 / MGH 78578).